We begin with the raw amino-acid sequence, 493 residues long: Rho guanine nucleotide exchange factor 9 (493 aa).

Positions 15–74 (DSIVSAEAVWDHVTMANRGVAFKAGDVIKVLDASNKDWWWGQIDDEEGWFPASFVRLWVN) constitute an SH3 domain. An interaction with GPHN region spans residues 107–117 (RDQMRANVINE). Residues 110–294 (MRANVINEIM…RNVTQQINER (185 aa)) enclose the DH domain. In terms of domain architecture, PH spans 325 to 432 (ELIYTGEMAW…WLRAFREERK (108 aa)). The disordered stretch occupies residues 453–473 (AMTVRKASKQKGRVGEEENQS).

As to quaternary structure, interacts with GPHN. As to expression, detected in brain, throughout the gray matter. Detected at low levels in heart and skeletal muscle.

The protein localises to the cytoplasm. It localises to the postsynaptic density. Its function is as follows. Acts as a guanine nucleotide exchange factor (GEF) for CDC42. Promotes formation of GPHN clusters. This Rattus norvegicus (Rat) protein is Rho guanine nucleotide exchange factor 9 (Arhgef9).